Here is a 341-residue protein sequence, read N- to C-terminus: Holliday junction branch migration complex subunit RuvB (341 aa).

The segment at 1-182 (MTDADPTLRP…FGIPTRLLFY (182 aa)) is large ATPase domain (RuvB-L). Residues Leu21, Arg22, Gly63, Lys66, Thr67, Thr68, 129–131 (EDF), Arg172, Tyr182, and Arg219 contribute to the ATP site. Thr67 contacts Mg(2+). Residues 183–253 (TVDELFEIVS…LADHALTRLG (71 aa)) are small ATPAse domain (RuvB-S). The tract at residues 256-341 (QLGLDGADRR…RPPGQSDLFG (86 aa)) is head domain (RuvB-H). DNA contacts are provided by Arg292, Arg311, and Arg316.

It belongs to the RuvB family. Homohexamer. Forms an RuvA(8)-RuvB(12)-Holliday junction (HJ) complex. HJ DNA is sandwiched between 2 RuvA tetramers; dsDNA enters through RuvA and exits via RuvB. An RuvB hexamer assembles on each DNA strand where it exits the tetramer. Each RuvB hexamer is contacted by two RuvA subunits (via domain III) on 2 adjacent RuvB subunits; this complex drives branch migration. In the full resolvosome a probable DNA-RuvA(4)-RuvB(12)-RuvC(2) complex forms which resolves the HJ.

The protein localises to the cytoplasm. It carries out the reaction ATP + H2O = ADP + phosphate + H(+). Functionally, the RuvA-RuvB-RuvC complex processes Holliday junction (HJ) DNA during genetic recombination and DNA repair, while the RuvA-RuvB complex plays an important role in the rescue of blocked DNA replication forks via replication fork reversal (RFR). RuvA specifically binds to HJ cruciform DNA, conferring on it an open structure. The RuvB hexamer acts as an ATP-dependent pump, pulling dsDNA into and through the RuvAB complex. RuvB forms 2 homohexamers on either side of HJ DNA bound by 1 or 2 RuvA tetramers; 4 subunits per hexamer contact DNA at a time. Coordinated motions by a converter formed by DNA-disengaged RuvB subunits stimulates ATP hydrolysis and nucleotide exchange. Immobilization of the converter enables RuvB to convert the ATP-contained energy into a lever motion, pulling 2 nucleotides of DNA out of the RuvA tetramer per ATP hydrolyzed, thus driving DNA branch migration. The RuvB motors rotate together with the DNA substrate, which together with the progressing nucleotide cycle form the mechanistic basis for DNA recombination by continuous HJ branch migration. Branch migration allows RuvC to scan DNA until it finds its consensus sequence, where it cleaves and resolves cruciform DNA. This is Holliday junction branch migration complex subunit RuvB from Ruegeria pomeroyi (strain ATCC 700808 / DSM 15171 / DSS-3) (Silicibacter pomeroyi).